The following is a 63-amino-acid chain: uncharacterized protein (63 aa).

The segment covering 1-15 (MGRNHIHKNRDKNKQ) has biased composition (basic residues). Positions 1-63 (MGRNHIHKNR…ADNRAKKKSR (63 aa)) are disordered. Residues 30 to 44 (GVYEEYSTELADADD) are compositionally biased toward acidic residues. The span at 45 to 57 (REAQERAKAADNR) shows a compositional bias: basic and acidic residues.

This is an uncharacterized protein from Bacillus subtilis (strain 168).